The primary structure comprises 89 residues: Small ribosomal subunit protein uS14A (89 aa).

This sequence belongs to the universal ribosomal protein uS14 family. As to quaternary structure, part of the 30S ribosomal subunit. Contacts proteins S3 and S10.

Its function is as follows. Binds 16S rRNA, required for the assembly of 30S particles and may also be responsible for determining the conformation of the 16S rRNA at the A site. The protein is Small ribosomal subunit protein uS14A of Bacillus licheniformis (strain ATCC 14580 / DSM 13 / JCM 2505 / CCUG 7422 / NBRC 12200 / NCIMB 9375 / NCTC 10341 / NRRL NRS-1264 / Gibson 46).